Reading from the N-terminus, the 276-residue chain is Ice-binding protein (276 aa).

The first 24 residues, 1 to 24 (MKILKRIPVLAVLLVGLMTNCSND), serve as a signal peptide directing secretion. An Ice-binding site motif (T-A/G-X-T/N) 1 motif is present at residues 79 to 82 (TGIT). Cys-107 and Cys-124 are disulfide-bonded. 2 short sequence motifs (ice-binding site motif (T-A/G-X-T/N)) span residues 245-248 (TGIN) and 263-266 (TAVT).

This sequence belongs to the ice-binding protein family. Monomer.

The protein localises to the secreted. In terms of biological role, has antifreeze activity for survival in a subzero environment. Binds to the surface of ice crystals and inhibits their growth. Has high thermal hysteresis (TH) activity, which is the ability to lower the freezing point of an aqueous solution below its melting point, and thus the freezing of the cell fluid can be prevented protecting the organism from ice damage. The TH activity of this protein is 2.2 degrees Celsius at 5 uM and 2.5 degrees Celsius at 50 uM. The polypeptide is Ice-binding protein (Flavobacterium frigoris (strain PS1)).